Reading from the N-terminus, the 497-residue chain is 4,4'-diaponeurosporene oxygenase (497 aa).

7-19 (VIGGGLGGISAAI) is a binding site for FAD.

This sequence belongs to the carotenoid/retinoid oxidoreductase family. CrtP subfamily. FAD is required as a cofactor.

It carries out the reaction all-trans-4,4'-diaponeurosporene + 2 AH2 + 2 O2 = 4,4'-diaponeurosporenal + 2 A + 3 H2O. Its pathway is carotenoid biosynthesis; staphyloxanthin biosynthesis; staphyloxanthin from farnesyl diphosphate: step 3/5. In terms of biological role, involved in the biosynthesis of the yellow-orange carotenoid staphyloxanthin, which plays a role in the virulence via its protective function against oxidative stress. Catalyzes the oxidation of the terminal methyl side group of 4,4'-diaponeurosporene to form 4,4'-diaponeurosporen-4-al. The C40 carotenoid lycopene is a poor substrate. The protein is 4,4'-diaponeurosporene oxygenase of Staphylococcus aureus (strain Mu50 / ATCC 700699).